The chain runs to 328 residues: uncharacterized protein (328 aa).

Residues R3–G126 enclose the Bro-N domain.

This is an uncharacterized protein from Autographa californica nuclear polyhedrosis virus (AcMNPV).